Here is a 529-residue protein sequence, read N- to C-terminus: uncharacterized protein (529 aa).

ABC transporter domains are found at residues 6–257 (LAIE…QKLL) and 287–526 (IRKG…RQLL). ATP contacts are provided by residues 42–49 (GESGSGKS) and 319–326 (GESGSGKS).

Belongs to the ABC transporter superfamily.

This is an uncharacterized protein from Escherichia coli (strain K12).